A 147-amino-acid polypeptide reads, in one-letter code: SsrA-binding protein (147 aa).

This sequence belongs to the SmpB family.

The protein localises to the cytoplasm. Functionally, required for rescue of stalled ribosomes mediated by trans-translation. Binds to transfer-messenger RNA (tmRNA), required for stable association of tmRNA with ribosomes. tmRNA and SmpB together mimic tRNA shape, replacing the anticodon stem-loop with SmpB. tmRNA is encoded by the ssrA gene; the 2 termini fold to resemble tRNA(Ala) and it encodes a 'tag peptide', a short internal open reading frame. During trans-translation Ala-aminoacylated tmRNA acts like a tRNA, entering the A-site of stalled ribosomes, displacing the stalled mRNA. The ribosome then switches to translate the ORF on the tmRNA; the nascent peptide is terminated with the 'tag peptide' encoded by the tmRNA and targeted for degradation. The ribosome is freed to recommence translation, which seems to be the essential function of trans-translation. The polypeptide is SsrA-binding protein (Thermosipho melanesiensis (strain DSM 12029 / CIP 104789 / BI429)).